Reading from the N-terminus, the 514-residue chain is MSLTEEIKKRRTFAIISHPDAGKTTITEQLLYFGGEIREAGTVKGKKSGTFAKSDWMDIEKQRGISVTSSVMQFDYAGKRVNILDTPGHEDFSEDTYRTLMAVDAAVMVVDSAKGIEAQTKKLFEVVKHRNIPVFTFINKLDRDGREPLELLEELEEVLGIASYPMNWPIGMGRAFEGLYDLHNKRLELYKGDERFASIEDGDQLFANNPFYEQVKEDIELLQEAGNVFSEQAILDGDLTPVFFGSALTNFGVQTFLDTFLEFAPEPHGHKTTEGNVVDPLAKDFSGFVFKIQANMDPKHRDRIAFVRIVSGEFERGMGVNLTRTGKGAKLSNVTQFMAESRENVTNAVAGDIIGVYDTGTYQVGDTLTVGKNKFEFEPLPTFTPEIFMKVSPKNVMKQKSFHKGIEQLVQEGAIQLYKNYQTGEYMLGAVGQLQFEVFKHRMEGEYNAEVVMTPMGKKTVRWISEDDLDQRMSSSRNILAKDRFDQPVFLFENDFALRWFADKYPDVTLEEKM.

Residues 8–268 enclose the tr-type G domain; the sequence is KKRRTFAIIS…TFLEFAPEPH (261 aa). Residues 17–24, 85–89, and 139–142 contribute to the GTP site; these read SHPDAGKT, DTPGH, and NKLD.

The protein belongs to the TRAFAC class translation factor GTPase superfamily. Classic translation factor GTPase family. PrfC subfamily.

The protein resides in the cytoplasm. Its function is as follows. Increases the formation of ribosomal termination complexes and stimulates activities of RF-1 and RF-2. It binds guanine nucleotides and has strong preference for UGA stop codons. It may interact directly with the ribosome. The stimulation of RF-1 and RF-2 is significantly reduced by GTP and GDP, but not by GMP. The chain is Peptide chain release factor 3 from Streptococcus pyogenes serotype M28 (strain MGAS6180).